The chain runs to 258 residues: Thiazole synthase (258 aa).

Catalysis depends on Lys-100, which acts as the Schiff-base intermediate with DXP. 1-deoxy-D-xylulose 5-phosphate-binding positions include Gly-161, Ala-187–Gly-188, and Asn-209–Thr-210.

This sequence belongs to the ThiG family. In terms of assembly, homotetramer. Forms heterodimers with either ThiH or ThiS.

The protein resides in the cytoplasm. The enzyme catalyses [ThiS sulfur-carrier protein]-C-terminal-Gly-aminoethanethioate + 2-iminoacetate + 1-deoxy-D-xylulose 5-phosphate = [ThiS sulfur-carrier protein]-C-terminal Gly-Gly + 2-[(2R,5Z)-2-carboxy-4-methylthiazol-5(2H)-ylidene]ethyl phosphate + 2 H2O + H(+). It participates in cofactor biosynthesis; thiamine diphosphate biosynthesis. In terms of biological role, catalyzes the rearrangement of 1-deoxy-D-xylulose 5-phosphate (DXP) to produce the thiazole phosphate moiety of thiamine. Sulfur is provided by the thiocarboxylate moiety of the carrier protein ThiS. In vitro, sulfur can be provided by H(2)S. The protein is Thiazole synthase of Campylobacter jejuni subsp. jejuni serotype O:2 (strain ATCC 700819 / NCTC 11168).